The following is a 657-amino-acid chain: tRNA 5-methylaminomethyl-2-thiouridine biosynthesis bifunctional protein MnmC (657 aa).

Positions 1–239 (MTDRIVPATL…KRAMLVGEFA (239 aa)) are tRNA (mnm(5)s(2)U34)-methyltransferase. Residues 263-657 (IGAGLAGCAV…VRALRHGRVA (395 aa)) form an FAD-dependent cmnm(5)s(2)U34 oxidoreductase region.

In the N-terminal section; belongs to the methyltransferase superfamily. tRNA (mnm(5)s(2)U34)-methyltransferase family. This sequence in the C-terminal section; belongs to the DAO family. Requires FAD as cofactor.

It localises to the cytoplasm. It catalyses the reaction 5-aminomethyl-2-thiouridine(34) in tRNA + S-adenosyl-L-methionine = 5-methylaminomethyl-2-thiouridine(34) in tRNA + S-adenosyl-L-homocysteine + H(+). Catalyzes the last two steps in the biosynthesis of 5-methylaminomethyl-2-thiouridine (mnm(5)s(2)U) at the wobble position (U34) in tRNA. Catalyzes the FAD-dependent demodification of cmnm(5)s(2)U34 to nm(5)s(2)U34, followed by the transfer of a methyl group from S-adenosyl-L-methionine to nm(5)s(2)U34, to form mnm(5)s(2)U34. The polypeptide is tRNA 5-methylaminomethyl-2-thiouridine biosynthesis bifunctional protein MnmC (Burkholderia mallei (strain SAVP1)).